Reading from the N-terminus, the 105-residue chain is UPF0148 protein PH0795 (105 aa).

Belongs to the UPF0148 family.

The polypeptide is UPF0148 protein PH0795 (Pyrococcus horikoshii (strain ATCC 700860 / DSM 12428 / JCM 9974 / NBRC 100139 / OT-3)).